The following is a 344-amino-acid chain: Cysteine proteinase 5 (344 aa).

A signal peptide spans 1 to 17 (MKVLSFLCVLLVSVATA). The propeptide at 18-111 (KQQFSELQYR…TQEEKVFTTS (94 aa)) is activation peptide. Disulfide bonds link cysteine 133–cysteine 174, cysteine 167–cysteine 207, and cysteine 265–cysteine 333. The active site involves cysteine 136. Residue histidine 272 is part of the active site. An N-linked (GlcNAc...) asparagine glycan is attached at asparagine 297. Asparagine 311 is a catalytic residue.

It belongs to the peptidase C1 family. Glycosylated; contains GlcNAc-alpha-1-P-Ser residues.

It localises to the lysosome. The chain is Cysteine proteinase 5 (cprE) from Dictyostelium discoideum (Social amoeba).